A 459-amino-acid chain; its full sequence is 1,3-beta-glucanosyltransferase gas2 (459 aa).

Residues 1–19 form the signal peptide; it reads MVSFTKFTLQLLSASAAFA. N-linked (GlcNAc...) asparagine glycans are attached at residues Asn-34 and Asn-68. Residues Cys-69 and Cys-98 are joined by a disulfide bond. Position 87 (Tyr-87) interacts with (1,3-beta-D-glucosyl)n. N-linked (GlcNAc...) asparagine glycosylation is found at Asn-90, Asn-104, and Asn-146. The (1,3-beta-D-glucosyl)n site is built by Asn-155 and Glu-156. The Proton donor role is filled by Glu-156. Asn-160 carries N-linked (GlcNAc...) asparagine glycosylation. Residues Asp-197 and Arg-202 each contribute to the (1,3-beta-D-glucosyl)n site. Intrachain disulfides connect Cys-211-Cys-350 and Cys-235-Cys-266. Residues Asn-212, Asn-218, and Asn-254 are each glycosylated (N-linked (GlcNAc...) asparagine). Glu-263 serves as the catalytic Nucleophile. N-linked (GlcNAc...) asparagine glycosylation occurs at Asn-284. A (1,3-beta-D-glucosyl)n-binding site is contributed by Tyr-295. Asn-308, Asn-334, Asn-344, Asn-354, and Asn-370 each carry an N-linked (GlcNAc...) asparagine glycan. Disulfide bonds link Cys-374–Cys-427, Cys-383–Cys-449, and Cys-402–Cys-409. Asn-423 is a glycosylation site (N-linked (GlcNAc...) asparagine).

It belongs to the glycosyl hydrolase 72 family.

It localises to the endoplasmic reticulum lumen. The protein localises to the secreted. Functionally, splits internally a 1,3-beta-glucan molecule and transfers the newly generated reducing end (the donor) to the non-reducing end of another 1,3-beta-glucan molecule (the acceptor) forming a 1,3-beta linkage, resulting in the elongation of 1,3-beta-glucan chains in the cell wall. In Schizosaccharomyces pombe (strain 972 / ATCC 24843) (Fission yeast), this protein is 1,3-beta-glucanosyltransferase gas2 (gas2).